The primary structure comprises 290 residues: Agmatinase (290 aa).

Mn(2+) contacts are provided by His112, Asp135, His137, Asp139, Asp216, and Asp218.

Belongs to the arginase family. Agmatinase subfamily. It depends on Mn(2+) as a cofactor.

It carries out the reaction agmatine + H2O = urea + putrescine. The protein operates within amine and polyamine biosynthesis; putrescine biosynthesis via agmatine pathway; putrescine from agmatine: step 1/1. Catalyzes the formation of putrescine from agmatine. The chain is Agmatinase (speB) from Bacillus anthracis.